We begin with the raw amino-acid sequence, 134 residues long: Alkaline proteinase inhibitor (134 aa).

An N-terminal signal peptide occupies residues 1–26 (MVFAAWYLKFAFFVALAFSIIGGSMA). A disulfide bond links cysteine 50 and cysteine 73.

It belongs to the protease inhibitor I38 family.

The protein localises to the periplasm. Inhibitor of the alkaline protease. This chain is Alkaline proteinase inhibitor (inh), found in Photorhabdus luminescens (Xenorhabdus luminescens).